Reading from the N-terminus, the 373-residue chain is 3 beta-hydroxysteroid dehydrogenase/Delta 5--&gt;4-isomerase type 2 (373 aa).

The Proton acceptor role is filled by Y155. K159 lines the NAD(+) pocket. Residues 288 to 308 (VALLYWLGFLLELVNFLLRPV) traverse the membrane as a helical segment.

Belongs to the 3-beta-HSD family. High levels in adrenal gland, kidney and male liver. Low levels in female liver.

The protein localises to the endoplasmic reticulum membrane. It localises to the mitochondrion membrane. It carries out the reaction a 3beta-hydroxy-Delta(5)-steroid + NAD(+) = a 3-oxo-Delta(5)-steroid + NADH + H(+). It catalyses the reaction a 3-oxo-Delta(5)-steroid = a 3-oxo-Delta(4)-steroid. The enzyme catalyses pregnenolone + NAD(+) = pregn-5-ene-3,20-dione + NADH + H(+). The catalysed reaction is pregn-5-ene-3,20-dione = progesterone. It carries out the reaction 3beta-hydroxyandrost-5-en-17-one + NAD(+) = androst-5-ene-3,17-dione + NADH + H(+). It catalyses the reaction androst-5-ene-3,17-dione = androst-4-ene-3,17-dione. It participates in lipid metabolism; steroid biosynthesis. In terms of biological role, 3-beta-HSD is a bifunctional enzyme, that catalyzes the oxidative conversion of Delta(5)-ene-3-beta-hydroxy steroid, and the oxidative conversion of ketosteroids. The 3-beta-HSD enzymatic system plays a crucial role in the biosynthesis of all classes of hormonal steroids. The sequence is that of 3 beta-hydroxysteroid dehydrogenase/Delta 5--&gt;4-isomerase type 2 (HSD3B2) from Mesocricetus auratus (Golden hamster).